A 218-amino-acid chain; its full sequence is Adenylate kinase (218 aa).

10 to 15 (GVGKGT) lines the ATP pocket. An NMP region spans residues 30–59 (STGDMLRSAIKQGTELGLKAKSFIDKGELV). AMP is bound by residues threonine 31, arginine 36, 57 to 59 (ELV), 86 to 89 (GFPR), and glutamine 93. Positions 127–164 (GRRIAPSTGKVYHVVYNPPKVEGKCDETGEDLIIREDD) are LID. Residues arginine 128 and 137 to 138 (VY) contribute to the ATP site. Residues arginine 161 and arginine 172 each contribute to the AMP site. Glutamine 200 is an ATP binding site.

It belongs to the adenylate kinase family. As to quaternary structure, monomer.

The protein localises to the cytoplasm. The enzyme catalyses AMP + ATP = 2 ADP. The protein operates within purine metabolism; AMP biosynthesis via salvage pathway; AMP from ADP: step 1/1. Catalyzes the reversible transfer of the terminal phosphate group between ATP and AMP. Plays an important role in cellular energy homeostasis and in adenine nucleotide metabolism. The protein is Adenylate kinase of Chloroherpeton thalassium (strain ATCC 35110 / GB-78).